Consider the following 173-residue polypeptide: Photosystem I assembly protein Ycf3 (173 aa).

3 TPR repeats span residues 35 to 68, 72 to 105, and 120 to 153; these read AYIY…EENK, GETL…NPKQ, and GRYA…YPGG.

The protein belongs to the Ycf3 family.

The protein localises to the cellular thylakoid membrane. Its function is as follows. Essential for the assembly of the photosystem I (PSI) complex. May act as a chaperone-like factor to guide the assembly of the PSI subunits. The protein is Photosystem I assembly protein Ycf3 of Prochlorococcus marinus (strain MIT 9215).